The primary structure comprises 287 residues: Phosphatidylglycerol--prolipoprotein diacylglyceryl transferase (287 aa).

The next 4 membrane-spanning stretches (helical) occupy residues 15–35, 55–75, 90–110, and 117–137; these read IGPL…ILAI, FVMF…VFFE, IWEG…TAIV, and VSFW…QAIG. Residue Arg-138 coordinates a 1,2-diacyl-sn-glycero-3-phospho-(1'-sn-glycerol). A run of 2 helical transmembrane segments spans residues 180-200 and 238-258; these read HPTF…LLLL and IIRT…IFII.

It belongs to the Lgt family.

It localises to the cell membrane. The catalysed reaction is L-cysteinyl-[prolipoprotein] + a 1,2-diacyl-sn-glycero-3-phospho-(1'-sn-glycerol) = an S-1,2-diacyl-sn-glyceryl-L-cysteinyl-[prolipoprotein] + sn-glycerol 1-phosphate + H(+). Its pathway is protein modification; lipoprotein biosynthesis (diacylglyceryl transfer). Catalyzes the transfer of the diacylglyceryl group from phosphatidylglycerol to the sulfhydryl group of the N-terminal cysteine of a prolipoprotein, the first step in the formation of mature lipoproteins. The sequence is that of Phosphatidylglycerol--prolipoprotein diacylglyceryl transferase from Oceanobacillus iheyensis (strain DSM 14371 / CIP 107618 / JCM 11309 / KCTC 3954 / HTE831).